A 335-amino-acid chain; its full sequence is Nucleoid-associated protein YejK (335 aa).

It belongs to the YejK family.

It localises to the cytoplasm. Its subcellular location is the nucleoid. This chain is Nucleoid-associated protein YejK, found in Shigella dysenteriae serotype 1 (strain Sd197).